Reading from the N-terminus, the 331-residue chain is Geranylgeranyl transferase type-2 subunit beta (331 aa).

Position 2 is an N-acetylglycine (Gly-2). Position 3 is a phosphothreonine (Thr-3). PFTB repeat units follow at residues 20 to 61, 68 to 109, 116 to 157, 164 to 205, 212 to 253, and 260 to 302; these read LEKH…DLMG, REEI…TLYD, INKV…ALLG, VEKA…AITS, SDLL…KIIG, and REKL…SLLG. 190-192 is a geranylgeranyl diphosphate binding site; it reads HAG. Zn(2+) contacts are provided by Asp-238 and Cys-240. 241 to 244 contributes to the geranylgeranyl diphosphate binding site; that stretch reads YSWW. His-290 contributes to the Zn(2+) binding site.

Belongs to the protein prenyltransferase subunit beta family. As to quaternary structure, heterotrimer composed of RABGGTA, RABGGTB and CHM; within this trimer, RABGGTA and RABGGTB form the catalytic component B, while CHM (component A) mediates peptide substrate binding. The Rab GGTase dimer (RGGT) interacts with CHM (component A) prior to Rab protein binding; the association is stabilized by geranylgeranyl pyrophosphate (GGpp). The CHM:RGGT:Rab complex is destabilized by GGpp. Interaction of RABGGTB with prenylated PTP4A2 precludes its association with RABGGTA and inhibits enzyme activity. Interacts with CHODL. Interacts with non-phosphorylated form of RAB8A; phosphorylation of RAB8A at 'Thr-72' disrupts this interaction. Zn(2+) is required as a cofactor.

The catalysed reaction is geranylgeranyl diphosphate + L-cysteinyl-[protein] = S-geranylgeranyl-L-cysteinyl-[protein] + diphosphate. Its activity is regulated as follows. The enzymatic reaction requires the aid of a Rab escort protein (also called component A). Functionally, catalyzes the transfer of a geranylgeranyl moiety from geranylgeranyl diphosphate to both cysteines of Rab proteins with the C-terminal sequence -XXCC, -XCXC and -CCXX, such as RAB1A, RAB3A, RAB5A and RAB7A. The sequence is that of Geranylgeranyl transferase type-2 subunit beta (RABGGTB) from Bos taurus (Bovine).